We begin with the raw amino-acid sequence, 311 residues long: Thioredoxin reductase (311 aa).

33 to 43 serves as a coordination point for FAD; it reads EGFFSGISGGQ. A disulfide bridge links Cys-138 with Cys-141. An FAD-binding site is contributed by 283–292; the sequence is DVQDKYYRQA.

This sequence belongs to the class-II pyridine nucleotide-disulfide oxidoreductase family. As to quaternary structure, homodimer. FAD serves as cofactor.

It localises to the cytoplasm. It carries out the reaction [thioredoxin]-dithiol + NADP(+) = [thioredoxin]-disulfide + NADPH + H(+). The sequence is that of Thioredoxin reductase (trxB) from Chlamydia pneumoniae (Chlamydophila pneumoniae).